The following is a 260-amino-acid chain: MIETYSQPSPRSVATGLPASMKIFMYLLTVFLITQMIGSVLFAVYLHRRLDKVEEEVNLHEDFVFIKKLKRCNKGEGSLSLLNCEEMRRQFEDLVKDITLNKEEKKENSFEMQRGDEDPQIAAHVVSEANSNAASVLQWAKKGYYTMKSNLVMLENGKQLTVKREGLYYVYTQVTFCSNREPSSQRPFIVGLWLKPSSGSERILLKAANTHSSSQLCEQQSVHLGGVFELQAGASVFVNVTEASQVIHRVGFSSFGLLKL.

Over 1 to 22 (MIETYSQPSPRSVATGLPASMK) the chain is Cytoplasmic. The chain crosses the membrane as a helical; Signal-anchor for type II membrane protein span at residues 23–46 (IFMYLLTVFLITQMIGSVLFAVYL). Topologically, residues 47–260 (HRRLDKVEEE…GFSSFGLLKL (214 aa)) are extracellular. The THD domain maps to 121–260 (IAAHVVSEAN…GFSSFGLLKL (140 aa)). Cys177 and Cys217 are joined by a disulfide. N-linked (GlcNAc...) asparagine glycosylation occurs at Asn239.

Belongs to the tumor necrosis factor family. As to quaternary structure, homotrimer. Interacts with CD28. CD40 ligand, soluble form: Exists as either a monomer or a homotrimer. Forms a ternary complex between CD40 and integrins for CD40-CD40LG signaling. The soluble form derives from the membrane form by proteolytic processing. In terms of tissue distribution, specifically expressed on activated CD4+ T-lymphocytes.

The protein resides in the cell membrane. It localises to the cell surface. Its subcellular location is the secreted. In terms of biological role, cytokine that acts as a ligand to CD40/TNFRSF5. Costimulates T-cell proliferation and cytokine production. Its cross-linking on T-cells generates a costimulatory signal which enhances the production of IL4 and IL10 in conjunction with the TCR/CD3 ligation and CD28 costimulation. Induces the activation of NF-kappa-B. Induces the activation of kinases MAPK8 and PAK2 in T-cells. Mediates B-cell proliferation in the absence of co-stimulus as well as IgE production in the presence of IL4. Involved in immunoglobulin class switching. Functionally, acts as a ligand for integrins, specifically ITGA5:ITGB1 and ITGAV:ITGB3; both integrins and the CD40 receptor are required for activation of CD40-CD40LG signaling, which have cell-type dependent effects, such as B-cell activation, NF-kappa-B signaling and anti-apoptotic signaling. This chain is CD40 ligand (Cd40lg), found in Mus musculus (Mouse).